Here is a 148-residue protein sequence, read N- to C-terminus: Large ribosomal subunit protein uL15 (148 aa).

Residues 1–51 (MNLSNLKPAEGSTKTRKRIGRGPGSGLGGTSTRGHKGAKSRSGYSKKIGFE) form a disordered region. Over residues 21–31 (RGPGSGLGGTS) the composition is skewed to gly residues.

It belongs to the universal ribosomal protein uL15 family. As to quaternary structure, part of the 50S ribosomal subunit.

Binds to the 23S rRNA. The polypeptide is Large ribosomal subunit protein uL15 (Phocaeicola vulgatus (strain ATCC 8482 / DSM 1447 / JCM 5826 / CCUG 4940 / NBRC 14291 / NCTC 11154) (Bacteroides vulgatus)).